The following is a 207-amino-acid chain: dTTP/UTP pyrophosphatase (207 aa).

D79 functions as the Proton acceptor in the catalytic mechanism.

Belongs to the Maf family. YhdE subfamily. A divalent metal cation serves as cofactor.

It localises to the cytoplasm. It catalyses the reaction dTTP + H2O = dTMP + diphosphate + H(+). The enzyme catalyses UTP + H2O = UMP + diphosphate + H(+). Its function is as follows. Nucleoside triphosphate pyrophosphatase that hydrolyzes dTTP and UTP. May have a dual role in cell division arrest and in preventing the incorporation of modified nucleotides into cellular nucleic acids. This is dTTP/UTP pyrophosphatase from Rhodopseudomonas palustris (strain BisB5).